A 343-amino-acid polypeptide reads, in one-letter code: S-adenosylmethionine:tRNA ribosyltransferase-isomerase (343 aa).

This sequence belongs to the QueA family. Monomer.

Its subcellular location is the cytoplasm. The enzyme catalyses 7-aminomethyl-7-carbaguanosine(34) in tRNA + S-adenosyl-L-methionine = epoxyqueuosine(34) in tRNA + adenine + L-methionine + 2 H(+). It participates in tRNA modification; tRNA-queuosine biosynthesis. Transfers and isomerizes the ribose moiety from AdoMet to the 7-aminomethyl group of 7-deazaguanine (preQ1-tRNA) to give epoxyqueuosine (oQ-tRNA). The sequence is that of S-adenosylmethionine:tRNA ribosyltransferase-isomerase from Latilactobacillus sakei subsp. sakei (strain 23K) (Lactobacillus sakei subsp. sakei).